Consider the following 126-residue polypeptide: Histone H2B type 1-O (126 aa).

The segment covering 1–12 has biased composition (low complexity); sequence MPDPAKSAPAPK. Residues 1-35 form a disordered region; the sequence is MPDPAKSAPAPKKGSKKAVTKAQKKDGKKRKRSRK. The residue at position 2 (Pro-2) is an N-acetylproline; partial. An N6-(2-hydroxyisobutyryl)lysine; alternate modification is found at Lys-6. Position 6 is an N6-(beta-hydroxybutyryl)lysine; alternate (Lys-6). At Lys-6 the chain carries N6-acetyllysine; alternate. N6-butyryllysine; alternate is present on Lys-6. Lys-6 bears the N6-crotonyllysine; alternate mark. Lys-6 bears the N6-lactoyllysine; alternate mark. Lys-6 is covalently cross-linked (Glycyl lysine isopeptide (Lys-Gly) (interchain with G-Cter in SUMO2); alternate). Position 7 is an ADP-ribosylserine (Ser-7). Lys-12 carries the N6-(beta-hydroxybutyryl)lysine; alternate modification. N6-acetyllysine; alternate is present on residues Lys-12 and Lys-13. N6-crotonyllysine; alternate is present on residues Lys-12 and Lys-13. Lys-12 is subject to N6-lactoyllysine; alternate. Position 13 is an N6-(2-hydroxyisobutyryl)lysine; alternate (Lys-13). Ser-15 carries the phosphoserine; by STK4/MST1 modification. Residues Lys-16, Lys-17, Lys-21, and Lys-24 each carry the N6-acetyllysine; alternate modification. Residues Lys-16, Lys-17, Lys-21, and Lys-24 each carry the N6-crotonyllysine; alternate modification. N6-lactoyllysine; alternate is present on residues Lys-16, Lys-17, Lys-21, and Lys-24. Residues Lys-17 and Lys-21 each carry the N6-(beta-hydroxybutyryl)lysine; alternate modification. Lys-17 is subject to N6-glutaryllysine; alternate. Residues Lys-21 and Lys-24 each carry the N6-(2-hydroxyisobutyryl)lysine; alternate modification. N6-butyryllysine; alternate is present on Lys-21. Lys-21 is covalently cross-linked (Glycyl lysine isopeptide (Lys-Gly) (interchain with G-Cter in SUMO2); alternate). An N6-(2-hydroxyisobutyryl)lysine modification is found at Lys-25. Lys-35 carries the post-translational modification N6-(2-hydroxyisobutyryl)lysine; alternate. Lys-35 carries the post-translational modification N6-(beta-hydroxybutyryl)lysine; alternate. Residue Lys-35 is modified to N6-crotonyllysine; alternate. The residue at position 35 (Lys-35) is an N6-glutaryllysine; alternate. Lys-35 is subject to N6-succinyllysine; alternate. Residue Lys-35 forms a Glycyl lysine isopeptide (Lys-Gly) (interchain with G-Cter in ubiquitin); alternate linkage. Glu-36 carries the post-translational modification PolyADP-ribosyl glutamic acid. Phosphoserine; by AMPK is present on Ser-37. 3 positions are modified to N6-(2-hydroxyisobutyryl)lysine; alternate: Lys-44, Lys-47, and Lys-58. Lys-44 carries the N6-lactoyllysine; alternate modification. 2 positions are modified to N6-glutaryllysine; alternate: Lys-44 and Lys-47. Lys-47 carries the post-translational modification N6-methyllysine; alternate. Lys-58 carries the N6,N6-dimethyllysine; alternate modification. At Arg-80 the chain carries Dimethylated arginine. At Lys-86 the chain carries N6-(2-hydroxyisobutyryl)lysine; alternate. Position 86 is an N6-(beta-hydroxybutyryl)lysine; alternate (Lys-86). Residue Lys-86 is modified to N6-acetyllysine; alternate. An N6-lactoyllysine; alternate modification is found at Lys-86. An N6,N6,N6-trimethyllysine; alternate modification is found at Lys-86. 2 positions are modified to omega-N-methylarginine: Arg-87 and Arg-93. N6-(2-hydroxyisobutyryl)lysine; alternate is present on Lys-109. Residue Lys-109 is modified to N6-lactoyllysine; alternate. Lys-109 is modified (N6-glutaryllysine; alternate). Lys-109 bears the N6-methyllysine; alternate mark. An O-linked (GlcNAc) serine glycan is attached at Ser-113. Residue Thr-116 is modified to Phosphothreonine. Lys-117 and Lys-121 each carry N6-(2-hydroxyisobutyryl)lysine; alternate. Residues Lys-117 and Lys-121 each carry the N6-(beta-hydroxybutyryl)lysine; alternate modification. N6-lactoyllysine; alternate occurs at positions 117 and 121. Residues Lys-117 and Lys-121 each carry the N6-glutaryllysine; alternate modification. An N6-succinyllysine; alternate mark is found at Lys-117 and Lys-121. Lys-117 carries the post-translational modification N6-malonyllysine; alternate. Lys-117 bears the N6-methylated lysine; alternate mark. Residue Lys-121 forms a Glycyl lysine isopeptide (Lys-Gly) (interchain with G-Cter in ubiquitin); alternate linkage.

It belongs to the histone H2B family. In terms of assembly, the nucleosome is a histone octamer containing two molecules each of H2A, H2B, H3 and H4 assembled in one H3-H4 heterotetramer and two H2A-H2B heterodimers. The octamer wraps approximately 147 bp of DNA. Post-translationally, monoubiquitination at Lys-35 (H2BK34Ub) by the MSL1/MSL2 dimer is required for histone H3 'Lys-4' (H3K4me) and 'Lys-79' (H3K79me) methylation and transcription activation at specific gene loci, such as HOXA9 and MEIS1 loci. Similarly, monoubiquitination at Lys-121 (H2BK120Ub) by the RNF20/40 complex gives a specific tag for epigenetic transcriptional activation and is also prerequisite for histone H3 'Lys-4' and 'Lys-79' methylation. It also functions cooperatively with the FACT dimer to stimulate elongation by RNA polymerase II. H2BK120Ub also acts as a regulator of mRNA splicing: deubiquitination by USP49 is required for efficient cotranscriptional splicing of a large set of exons. Phosphorylation at Ser-37 (H2BS36ph) by AMPK in response to stress promotes transcription. Phosphorylated on Ser-15 (H2BS14ph) by STK4/MST1 during apoptosis; which facilitates apoptotic chromatin condensation. Also phosphorylated on Ser-15 in response to DNA double strand breaks (DSBs), and in correlation with somatic hypermutation and immunoglobulin class-switch recombination. In terms of processing, glcNAcylation at Ser-113 promotes monoubiquitination of Lys-121. It fluctuates in response to extracellular glucose, and associates with transcribed genes. Post-translationally, ADP-ribosylated by PARP1 or PARP2 on Ser-7 (H2BS6ADPr) in response to DNA damage. H2BS6ADPr promotes recruitment of CHD1L. Poly ADP-ribosylation on Glu-36 (H2BE35ADPr) by PARP1 regulates adipogenesis: it inhibits phosphorylation at Ser-37 (H2BS36ph), thereby blocking expression of pro-adipogenetic genes. Crotonylation (Kcr) is specifically present in male germ cells and marks testis-specific genes in post-meiotic cells, including X-linked genes that escape sex chromosome inactivation in haploid cells. Crotonylation marks active promoters and enhancers and confers resistance to transcriptional repressors. It is also associated with post-meiotically activated genes on autosomes. In terms of processing, lactylated in macrophages by EP300/P300 by using lactoyl-CoA directly derived from endogenous or exogenous lactate, leading to stimulates gene transcription.

It localises to the nucleus. The protein resides in the chromosome. Its function is as follows. Core component of nucleosome. Nucleosomes wrap and compact DNA into chromatin, limiting DNA accessibility to the cellular machineries which require DNA as a template. Histones thereby play a central role in transcription regulation, DNA repair, DNA replication and chromosomal stability. DNA accessibility is regulated via a complex set of post-translational modifications of histones, also called histone code, and nucleosome remodeling. This chain is Histone H2B type 1-O, found in Homo sapiens (Human).